Reading from the N-terminus, the 49-residue chain is Large ribosomal subunit protein bL33B (49 aa).

The protein belongs to the bacterial ribosomal protein bL33 family.

The protein is Large ribosomal subunit protein bL33B of Lactobacillus gasseri (strain ATCC 33323 / DSM 20243 / BCRC 14619 / CIP 102991 / JCM 1131 / KCTC 3163 / NCIMB 11718 / NCTC 13722 / AM63).